Consider the following 320-residue polypeptide: Aspartate carbamoyltransferase catalytic subunit (320 aa).

Residues Arg70 and Thr71 each coordinate carbamoyl phosphate. Lys98 is a binding site for L-aspartate. Carbamoyl phosphate-binding residues include Arg120, His150, and Gln153. 2 residues coordinate L-aspartate: Arg184 and Arg239. Carbamoyl phosphate is bound by residues Gly280 and Pro281.

This sequence belongs to the aspartate/ornithine carbamoyltransferase superfamily. ATCase family. In terms of assembly, heterododecamer (2C3:3R2) of six catalytic PyrB chains organized as two trimers (C3), and six regulatory PyrI chains organized as three dimers (R2).

The enzyme catalyses carbamoyl phosphate + L-aspartate = N-carbamoyl-L-aspartate + phosphate + H(+). It functions in the pathway pyrimidine metabolism; UMP biosynthesis via de novo pathway; (S)-dihydroorotate from bicarbonate: step 2/3. Functionally, catalyzes the condensation of carbamoyl phosphate and aspartate to form carbamoyl aspartate and inorganic phosphate, the committed step in the de novo pyrimidine nucleotide biosynthesis pathway. This chain is Aspartate carbamoyltransferase catalytic subunit, found in Xylella fastidiosa (strain Temecula1 / ATCC 700964).